The chain runs to 134 residues: S-protein homolog 31 (134 aa).

The signal sequence occupies residues 1–21; that stretch reads MKILSVFLFVFSIYIFGHVSG. N-linked (GlcNAc...) asparagine glycosylation is present at Asn87.

The protein belongs to the plant self-incompatibility (S1) protein family.

It is found in the secreted. This is S-protein homolog 31 from Arabidopsis thaliana (Mouse-ear cress).